A 113-amino-acid chain; its full sequence is Large ribosomal subunit protein bL17 (113 aa).

This sequence belongs to the bacterial ribosomal protein bL17 family. In terms of assembly, part of the 50S ribosomal subunit. Contacts protein L32.

The protein is Large ribosomal subunit protein bL17 of Caldicellulosiruptor saccharolyticus (strain ATCC 43494 / DSM 8903 / Tp8T 6331).